The sequence spans 589 residues: Serine/threonine-protein phosphatase 2A 65 kDa regulatory subunit A alpha isoform (589 aa).

Position 2 is an N-acetylalanine (alanine 2). 15 HEAT repeats span residues 8 to 46, 47 to 84, 85 to 123, 124 to 161, 162 to 200, 201 to 239, 240 to 278, 279 to 321, 322 to 360, 361 to 399, 400 to 438, 439 to 477, 478 to 516, 517 to 555, and 556 to 589; these read DSLY…GVER, TRSE…GGPE, YVHC…SPSD, LEAH…VSSA, VKAE…ELDN, VKSE…PQED, LEAL…GPEI, TKTD…RENV, IMSQ…GKDN, TIEH…GIRQ, LSQS…GVEF, FDEK…GKEW, AHAT…GQDI, TTKH…DNST, and LQSE…LSLA. The segment at 8-399 is PP2A subunit B binding; sequence DSLYPIAVLI…CVNEVIGIRQ (392 aa). Residues 47–321 form a polyoma small and medium T antigens Binding region; sequence TRSELLPFLT…NLSADCRENV (275 aa). The SV40 small T antigen binding stretch occupies residues 85–239; the sequence is YVHCLLPPLE…NIAQLLPQED (155 aa). At lysine 280 the chain carries N6-acetyllysine. Residues 400-589 form a PP2A subunit C binding region; that stretch reads LSQSLLPAIV…QEALTVLSLA (190 aa).

Belongs to the phosphatase 2A regulatory subunit A family. As to quaternary structure, PP2A consists of a common heterodimeric core enzyme, composed of PPP2CA a 36 kDa catalytic subunit (subunit C) and PPP2R1A a 65 kDa constant regulatory subunit (PR65 or subunit A), that associates with a variety of regulatory subunits. Proteins that associate with the core dimer include three families of regulatory subunits B (the R2/B/PR55/B55, R3/B''/PR72/PR130/PR59 and R5/B'/B56 families), the 48 kDa variable regulatory subunit, viral proteins, and cell signaling molecules. Found in a complex with at least ARL2, PPP2CB, PPP2R1A, PPP2R2A, PPP2R5E and TBCD. Interacts with the PP2A C catalytic subunit PPP2CA. Interacts with the PP2A B subunit PPP2R2A. Interacts with the PP2A B subunit PPP2R5D. Interacts with FOXO1; the interaction dephosphorylates FOXO1 on AKT-mediated phosphorylation sites. Interacts with IPO9. Interacts with TP53 and SGO1. Interacts with PLA2G16; this interaction might decrease PP2A activity. Interacts with CTTNBP2NL. Interacts with GNA12; the interaction promotes protein phosphatase 2A activation causing dephosphorylation of MAPT. Interacts with CIP2A; this interaction stabilizes CIP2A. Interacts with PABIR1/FAM122A. Interacts with ADCY8; antagonizes interaction between ADCY8 and calmodulin. Interacts with CRTC3 (when phosphorylated at 'Ser-391'). Interacts with SPRY2. Part of the core of STRIPAK complexes composed of PP2A catalytic and scaffolding subunits, the striatins (PP2A regulatory subunits), the striatin-associated proteins MOB4, STRIP1 and STRIP2, PDCD10 and members of the STE20 kinases, such as STK24 and STK26. Component of the Integrator-PP2A (INTAC) complex, composed of the Integrator core complex and protein phosphatase 2A subunits PPP2CA and PPP2R1A. In terms of assembly, (Microbial infection) Interacts with JC virus small t antigen; this interaction inhibits PPP2R1A activity.

It localises to the cytoplasm. The protein localises to the nucleus. It is found in the chromosome. The protein resides in the centromere. Its subcellular location is the lateral cell membrane. It localises to the cell projection. The protein localises to the dendrite. Functionally, the PR65 subunit of protein phosphatase 2A serves as a scaffolding molecule to coordinate the assembly of the catalytic subunit and a variable regulatory B subunit. Upon interaction with GNA12 promotes dephosphorylation of microtubule associated protein TAU/MAPT. Required for proper chromosome segregation and for centromeric localization of SGO1 in mitosis. Together with RACK1 adapter, mediates dephosphorylation of AKT1 at 'Ser-473', preventing AKT1 activation and AKT-mTOR signaling pathway. Dephosphorylation of AKT1 is essential for regulatory T-cells (Treg) homeostasis and stability. Part of the striatin-interacting phosphatase and kinase (STRIPAK) complexes. STRIPAK complexes have critical roles in protein (de)phosphorylation and are regulators of multiple signaling pathways including Hippo, MAPK, nuclear receptor and cytoskeleton remodeling. Different types of STRIPAK complexes are involved in a variety of biological processes such as cell growth, differentiation, apoptosis, metabolism and immune regulation. Key mediator of a quality checkpoint during transcription elongation as part of the Integrator-PP2A (INTAC) complex. The INTAC complex drives premature transcription termination of transcripts that are unfavorably configured for transcriptional elongation: within the INTAC complex, acts as a scaffolding subunit for PPP2CA, which catalyzes dephosphorylation of the C-terminal domain (CTD) of Pol II subunit POLR2A/RPB1 and SUPT5H/SPT5, thereby preventing transcriptional elongation. Regulates the recruitment of the SKA complex to kinetochores. This Homo sapiens (Human) protein is Serine/threonine-protein phosphatase 2A 65 kDa regulatory subunit A alpha isoform.